Reading from the N-terminus, the 320-residue chain is Putative fatty acid elongase 3 (320 aa).

N-linked (GlcNAc...) asparagine glycosylation is present at N14. 6 helical membrane passes run 33–53, 67–87, 120–140, 145–165, 203–223, and 242–262; these read WMQN…AVIF, LDTP…LGFL, FWTE…IFIV, PLIF…WHAY, MAMV…IIGV, and LGLC…FFYH.

The protein belongs to the ELO family.

The protein resides in the membrane. The enzyme catalyses a very-long-chain acyl-CoA + malonyl-CoA + H(+) = a very-long-chain 3-oxoacyl-CoA + CO2 + CoA. It functions in the pathway lipid metabolism; fatty acid biosynthesis. In terms of biological role, could be implicated in synthesis of very long chain fatty acids. May be required for normally rapid growth. In Caenorhabditis elegans, this protein is Putative fatty acid elongase 3 (elo-3).